We begin with the raw amino-acid sequence, 667 residues long: Serine/threonine-protein kinase BUR1 (667 aa).

The 319-residue stretch at 60 to 378 (YKEEEKLGQG…AMSAMKHPFF (319 aa)) folds into the Protein kinase domain. Residues 66–74 (LGQGTFGEV) and Lys-89 contribute to the ATP site. The active-site Proton acceptor is the Asp-207. Residues 408-667 (HEAMSQKGPS…SEQKDIADLY (260 aa)) form a disordered region. Over residues 432–443 (KFEKKSGIKREQ) the composition is skewed to basic and acidic residues. Residues 494–516 (NNHSGSLRNRITPSNMGTHSNPR) show a composition bias toward polar residues. Over residues 541–556 (YNRGYSSSVNSRYNNR) the composition is skewed to low complexity. 3 stretches are compositionally biased toward polar residues: residues 582–594 (DNNQ…QGHS), 602–611 (SKYNSTQTNI), and 622–632 (NEYNASKLGSQ). Positions 633-667 (DTKKNDYPKHSETQKQQNNEEKKIHSEQKDIADLY) are enriched in basic and acidic residues.

The protein belongs to the protein kinase superfamily. CMGC Ser/Thr protein kinase family. CDC2/CDKX subfamily.

Its subcellular location is the nucleus. The enzyme catalyses L-seryl-[protein] + ATP = O-phospho-L-seryl-[protein] + ADP + H(+). The catalysed reaction is L-threonyl-[protein] + ATP = O-phospho-L-threonyl-[protein] + ADP + H(+). It catalyses the reaction [DNA-directed RNA polymerase] + ATP = phospho-[DNA-directed RNA polymerase] + ADP + H(+). Functionally, serine/threonine-protein kinase involved in transcription regulation. Phosphorylates the UBC2/RAD6 ubiquitin-conjugating enzyme (E2), leading to monoubiquitination of histone H2B and the silencing of telomeric-associated genes. Also required for histone H3 methylation. Necessary for the recovery from pheromone-induced growth arrest in the cell cycle G1 phase. This chain is Serine/threonine-protein kinase BUR1 (BUR1), found in Candida glabrata (strain ATCC 2001 / BCRC 20586 / JCM 3761 / NBRC 0622 / NRRL Y-65 / CBS 138) (Yeast).